The following is a 514-amino-acid chain: 1,25-dihydroxyvitamin D(3) 24-hydroxylase, mitochondrial (514 aa).

A mitochondrion-targeting transit peptide spans 1–35; sequence MSCPIDKRRTLIAFLRRLRDLGQPPRSVTSKASAS. Cysteine 462 contacts heme.

It belongs to the cytochrome P450 family. Heme serves as cofactor.

The protein localises to the mitochondrion. It catalyses the reaction calcitriol + 2 reduced [adrenodoxin] + O2 + 2 H(+) = calcitetrol + 2 oxidized [adrenodoxin] + H2O. It carries out the reaction calcitetrol + 2 reduced [adrenodoxin] + O2 + 2 H(+) = (1S)-1,25-dihydroxy-24-oxocalciol + 2 oxidized [adrenodoxin] + 2 H2O. The catalysed reaction is (1S)-1,25-dihydroxy-24-oxocalciol + 2 reduced [adrenodoxin] + O2 + 2 H(+) = (1S)-1,23,25-trihydroxy-24-oxocalciol + 2 oxidized [adrenodoxin] + H2O. The enzyme catalyses (1S)-1,23-dihydroxy-24,25,26,27-tetranorcalciol + 2 reduced [adrenodoxin] + O2 + 2 H(+) = (1S)-1-hydroxy-23-oxo-24,25,26,27-tetranorcalciol + 2 oxidized [adrenodoxin] + 2 H2O. It catalyses the reaction (1S)-1-hydroxy-23-oxo-24,25,26,27-tetranorcalciol + 2 reduced [adrenodoxin] + O2 + H(+) = calcitroate + 2 oxidized [adrenodoxin] + H2O. It carries out the reaction calcidiol + 2 reduced [adrenodoxin] + O2 + 2 H(+) = secalciferol + 2 oxidized [adrenodoxin] + H2O. The catalysed reaction is secalciferol + 2 reduced [adrenodoxin] + O2 + 2 H(+) = 25-hydroxy-24-oxocalciol + 2 oxidized [adrenodoxin] + 2 H2O. The enzyme catalyses 25-hydroxy-24-oxocalciol + 2 reduced [adrenodoxin] + O2 + 2 H(+) = 23S,25-dihydroxy-24-oxocholecalciferol + 2 oxidized [adrenodoxin] + H2O. It catalyses the reaction 20S,23-dihydroxycholecalciferol + 2 reduced [adrenodoxin] + O2 + 2 H(+) = 20S,23,25-trihydroxycholecalciferol + 2 oxidized [adrenodoxin] + H2O. It carries out the reaction 20S,23-dihydroxycholecalciferol + 2 reduced [adrenodoxin] + O2 + 2 H(+) = 20S,23,24-trihydroxycholecalciferol + 2 oxidized [adrenodoxin] + H2O. The catalysed reaction is 20S-hydroxycholecalciferol + 2 reduced [adrenodoxin] + O2 + 2 H(+) = 20S,25-dihydroxycholecalciferol + 2 oxidized [adrenodoxin] + H2O. The enzyme catalyses 20S-hydroxycholecalciferol + 2 reduced [adrenodoxin] + O2 + 2 H(+) = 20S,24S-dihydroxycholecalciferol + 2 oxidized [adrenodoxin] + H2O. It catalyses the reaction 20S-hydroxycholecalciferol + 2 reduced [adrenodoxin] + O2 + 2 H(+) = 20S,24R-dihydroxycholecalciferol + 2 oxidized [adrenodoxin] + H2O. Functionally, a cytochrome P450 monooxygenase with a key role in vitamin D catabolism and calcium homeostasis. Via C24-oxidation pathway, catalyzes the inactivation of both the vitamin D precursor calcidiol (25-hydroxyvitamin D(3)) and the active hormone calcitriol (1-alpha,25-dihydroxyvitamin D(3)). With initial hydroxylation at C-24 (via C24-oxidation pathway), performs a sequential 6-step oxidation of calcitriol leading to the formation of the biliary metabolite calcitroic acid. Hydroxylates at C-24 or C-25 other vitamin D active metabolites, such as CYP11A1-derived secosteroids 20S-hydroxycholecalciferol and 20S,23-dihydroxycholecalciferol. Mechanistically, uses molecular oxygen inserting one oxygen atom into a substrate, and reducing the second into a water molecule, with two electrons provided by NADPH via FDXR/adrenodoxin reductase and FDX1/adrenodoxin. The chain is 1,25-dihydroxyvitamin D(3) 24-hydroxylase, mitochondrial (Cyp24a1) from Rattus norvegicus (Rat).